A 697-amino-acid polypeptide reads, in one-letter code: Putative flagellar export/assembly protein LfhA (697 aa).

The next 7 helical transmembrane spans lie at 19-39, 40-60, 66-86, 116-136, 204-224, 242-262, and 280-302; these read VPLVILCILAMVILPLPPALL, DILFTFNIVLAVMVLLVAVSA, FSLFPTILLITTLMRLTLNVA, GNFVVGFVVFIILMIINFIVV, AIAGMMILAINLIGGVCIGIF, IGDGLVAQIPSLLLSTAAAII, and LLASPSVLYTATGIMFVLAVVPG.

Belongs to the FHIPEP (flagella/HR/invasion proteins export pore) family.

The protein resides in the cell inner membrane. In terms of biological role, part of the flagellar gene cluster Flag-2. However, the Flag-2 flagellar system could be inactive in strain 042 due to a frameshift in lfgC. In Escherichia coli O44:H18 (strain 042 / EAEC), this protein is Putative flagellar export/assembly protein LfhA.